Reading from the N-terminus, the 526-residue chain is Na(+)/H(+) antiporter NhaB (526 aa).

Transmembrane regions (helical) follow at residues 25-45 (ILLFLVINPIAFYLDPFAAGW), 52-72 (IFTLAMALKCYPLQPGGLLAI), 89-109 (LVANIEVLLLLVFMVAGIYFM), 130-164 (LSLAFCLVSAFLSAFLDALTVIAVVISVATGFYAI), 204-224 (LMMHAAIGTALGGVCTLVGEP), 242-262 (IRMAPVTIPVFICGLLTCILV), 305-325 (AVIAIWLILGLAMHLAAVGLI), 350-370 (QEALPFTALLAVFFSVVAVII), 391-411 (LALFYLANGLLSMVSDNVFVG), 448-468 (VATPNGQAAFLFMLTSALAPL), 479-499 (MALPYTLVLGLVGFFSVELLL), and 505-525 (WFYQAGWLLPHSGAPAVLPAL).

The protein belongs to the NhaB Na(+)/H(+) (TC 2.A.34) antiporter family.

It localises to the cell inner membrane. The catalysed reaction is 2 Na(+)(in) + 3 H(+)(out) = 2 Na(+)(out) + 3 H(+)(in). Na(+)/H(+) antiporter that extrudes sodium in exchange for external protons. In Aeromonas salmonicida (strain A449), this protein is Na(+)/H(+) antiporter NhaB.